Here is a 110-residue protein sequence, read N- to C-terminus: Cyclin-dependent protein kinase inhibitor SMR8 (110 aa).

As to quaternary structure, interacts with CDKA-1 and D-type cyclins. Expressed in the root vascular tissue.

Functionally, probable cyclin-dependent protein kinase (CDK) inhibitor that functions as a repressor of mitosis in the endoreduplication cell cycle. The chain is Cyclin-dependent protein kinase inhibitor SMR8 from Arabidopsis thaliana (Mouse-ear cress).